The chain runs to 276 residues: Large ribosomal subunit protein uL2 (276 aa).

Disordered regions lie at residues 14 to 58 (RNAS…GGGH) and 221 to 276 (TRGE…KNRK). Positions 16 to 27 (ASVSDFSELTRS) are enriched in polar residues. A compositionally biased stretch (basic residues) spans 255–276 (RRPKKASNKMIVRRRPSGKNRK).

It belongs to the universal ribosomal protein uL2 family. Part of the 50S ribosomal subunit. Forms a bridge to the 30S subunit in the 70S ribosome.

Functionally, one of the primary rRNA binding proteins. Required for association of the 30S and 50S subunits to form the 70S ribosome, for tRNA binding and peptide bond formation. It has been suggested to have peptidyltransferase activity; this is somewhat controversial. Makes several contacts with the 16S rRNA in the 70S ribosome. The chain is Large ribosomal subunit protein uL2 from Bifidobacterium longum subsp. infantis (strain ATCC 15697 / DSM 20088 / JCM 1222 / NCTC 11817 / S12).